The following is a 536-amino-acid chain: MMLQTSTILQLLLFLVGSVSAYNILVFSPATSKSHLISNGRIADELARAGHNVTLLEIDFLGIVDTTKSAKLVKKTIVRTPKGMQGFRNVLQGFSEIVMEDPGLWGLVEGNIMYQNAYNALCEEFLEMDDIFQELKAQNFDGFFAEQLNICGFGYAKALGIERRFLISSCPYFSHVYDYTSHPAPYASVPFVADMSPEPTYFERAQNLLNGFTCNMLFRYMHTRLSFIFRNKFGQDFPSVPEIVRNADIIFLATDEIIDFSAPTLPNLVNIGGLGVDDDTTEMEPVFEAEMKKGEKGVILFSLGTIANTSTIDKKVMESFLGIVKKFPDYHFLIRADKYDKNTKERAKGISNVFVSDWLPQPAILHHPRLRTFITHAGYNGLVEAARAGVPLITIPFMFDQNLNSRAIEKKGWGIRSDKKKLLNDPDSFEADLKEMLTNPSYTKNAHRIRDLIKSKPLGARDRFIKTTEWVIQNGGVRELLTEGRDLSIISSYNLDIIVPVLFVLLYCLIIPFFKLIGGFYYYSCFGHIESKHKLD.

Positions 1 to 21 (MMLQTSTILQLLLFLVGSVSA) are cleaved as a signal peptide. N52 and N308 each carry an N-linked (GlcNAc...) asparagine glycan. A helical membrane pass occupies residues 497–517 (IIVPVLFVLLYCLIIPFFKLI).

It belongs to the UDP-glycosyltransferase family.

The protein resides in the membrane. It carries out the reaction glucuronate acceptor + UDP-alpha-D-glucuronate = acceptor beta-D-glucuronoside + UDP + H(+). The chain is Putative UDP-glucuronosyltransferase ugt-47 (ugt-47) from Caenorhabditis briggsae.